A 127-amino-acid chain; its full sequence is Fluoride-specific ion channel FluC (127 aa).

Helical transmembrane passes span 2-22, 35-55, 68-88, and 104-124; these read LSSL…RWAI, LGTL…IAIF, LITT…LEVV, and LLNL…VVWI. Positions 75 and 78 each coordinate Na(+).

Belongs to the fluoride channel Fluc/FEX (TC 1.A.43) family.

The protein resides in the cell inner membrane. The enzyme catalyses fluoride(in) = fluoride(out). Na(+) is not transported, but it plays an essential structural role and its presence is essential for fluoride channel function. Its function is as follows. Fluoride-specific ion channel. Important for reducing fluoride concentration in the cell, thus reducing its toxicity. This is Fluoride-specific ion channel FluC from Serratia proteamaculans (strain 568).